We begin with the raw amino-acid sequence, 402 residues long: Olfactomedin-like protein 1 (402 aa).

Residues 1 to 28 form the signal peptide; that stretch reads MMVALPGASASLVLFLAAFLPPLQHAQD. Asn66 carries N-linked (GlcNAc...) asparagine glycosylation. Residues 73–135 are a coiled coil; it reads RCQTHTNEYR…EAEEEKKIRT (63 aa). Residues Asn138 and Asn183 are each glycosylated (N-linked (GlcNAc...) asparagine). Residues 140–397 enclose the Olfactomedin-like domain; the sequence is SCDNMLMAIK…QIIYKLQTKK (258 aa). An intrachain disulfide couples Cys141 to Cys324.

Highly N-glycosylated.

It is found in the secreted. In Rattus norvegicus (Rat), this protein is Olfactomedin-like protein 1 (Olfml1).